The sequence spans 47 residues: Type II secretion system protein N (47 aa).

This sequence belongs to the GSP N family.

The protein localises to the cell inner membrane. Functionally, involved in a type II secretion system (T2SS, formerly general secretion pathway, GSP) for the export of proteins. The polypeptide is Type II secretion system protein N (exeN) (Aeromonas salmonicida).